The sequence spans 509 residues: MLFTIALVGVVLGLAYSLHIKIFSYWKRKGVPHETPLPIVGNMRGIVKKYHFRDINQRIYKKFKGQGPIAGMYMFFKRTALITDLDFIKQVMIKDFSYFQDRGAFTNPRDDPLTGHLFALEGEEWRAMRHKLTPVFTSGKIKQMSKVIVDVGLRLGDAMDKAVKEAKVEEGNVEIKDLCARFTTDVIGSCAFGLECNSLQDPSAEFRQKGREIFTRRRHSTLVQSFIFTNARLARKLRIKVLPDDLTQFFMSTVKNTVDYRLKNGIKRNDFIEQMIELRAEDQEAAKKGQGIDLSHGLTLEQMAAQAFVFFVAGFETSSSTMSLCLYELALQPDIQQRLREEIESVLANVDGGELNYDVLAQMTYLDQVLSETLRKHPLLPHLIRETTKDYQIPNSDIVLDKGILALIPVHNIHHDPEIYPEPEKFDPSRFDPEEVKNRHPMAYLPFGDGPRNCIGLRFGKIQAKIGLVSLLRRFKFSVSNRTDVPLIFSKKSFLLTTNDGIYLKVERV.

Heme is bound at residue cysteine 454.

It belongs to the cytochrome P450 family. Heme serves as cofactor.

It localises to the endoplasmic reticulum membrane. The protein localises to the microsome membrane. In terms of biological role, may be involved in the metabolism of insect hormones and in the breakdown of synthetic insecticides. In Drosophila melanogaster (Fruit fly), this protein is Probable cytochrome P450 6a14 (Cyp6a14).